A 551-amino-acid polypeptide reads, in one-letter code: Histone-lysine N-methyltransferase SETDB2 (551 aa).

An MBD domain is found at 146-210 (LLGHNPLRAP…DRFSFSTQVC (65 aa)). A Pre-SET domain is found at 269–329 (VCCDCTDGCT…RCENRVVQKG (61 aa)). Zn(2+) contacts are provided by Cys-271, Cys-273, Cys-277, Cys-283, Cys-285, Cys-310, Cys-314, Cys-316, and Cys-321. The SET domain occupies 332-537 (VRLQVFRTPE…AGTELTWSCT (206 aa)). Position 342-344 (342-344 (HMW)) interacts with S-adenosyl-L-methionine. A disordered region spans residues 426-447 (SLAQRRDQQQFSISSETEDNRC). Residues Arg-491 and 494-495 (TH) each bind S-adenosyl-L-methionine.

It belongs to the class V-like SAM-binding methyltransferase superfamily.

The protein resides in the nucleus. It is found in the chromosome. It catalyses the reaction N(6),N(6)-dimethyl-L-lysyl(9)-[histone H3] + S-adenosyl-L-methionine = N(6),N(6),N(6)-trimethyl-L-lysyl(9)-[histone H3] + S-adenosyl-L-homocysteine + H(+). Histone methyltransferase involved in left-right axis specification in early development and mitosis. Specifically trimethylates 'Lys-9' of histone H3 (H3K9me3). H3K9me3 represents a specific tag for epigenetic transcriptional repression by recruiting HP1 (CBX1, CBX3 and/or CBX5) proteins to methylated histones. Contributes to H3K9me3 in both the interspersed repetitive elements and centromere-associated repeats. Plays a role in chromosome condensation and segregation during mitosis. During early development, required to specify the left-right axis by repressing expression of FGF8, leading to negatively regulate the dorsal organizer formation. This Danio rerio (Zebrafish) protein is Histone-lysine N-methyltransferase SETDB2 (setdb2).